The sequence spans 239 residues: 4-hydroxy-tetrahydrodipicolinate reductase (239 aa).

NAD(+) contacts are provided by residues 9-14 (GINGKM), 78-80 (GTT), and 104-107 (APNF). His134 serves as the catalytic Proton donor/acceptor. Position 135 (His135) interacts with (S)-2,3,4,5-tetrahydrodipicolinate. Lys138 serves as the catalytic Proton donor. 144 to 145 (GT) is a (S)-2,3,4,5-tetrahydrodipicolinate binding site.

This sequence belongs to the DapB family.

The protein localises to the cytoplasm. The enzyme catalyses (S)-2,3,4,5-tetrahydrodipicolinate + NAD(+) + H2O = (2S,4S)-4-hydroxy-2,3,4,5-tetrahydrodipicolinate + NADH + H(+). The catalysed reaction is (S)-2,3,4,5-tetrahydrodipicolinate + NADP(+) + H2O = (2S,4S)-4-hydroxy-2,3,4,5-tetrahydrodipicolinate + NADPH + H(+). It functions in the pathway amino-acid biosynthesis; L-lysine biosynthesis via DAP pathway; (S)-tetrahydrodipicolinate from L-aspartate: step 4/4. In terms of biological role, catalyzes the conversion of 4-hydroxy-tetrahydrodipicolinate (HTPA) to tetrahydrodipicolinate. The polypeptide is 4-hydroxy-tetrahydrodipicolinate reductase (Coxiella burnetii (strain Dugway 5J108-111)).